The primary structure comprises 427 residues: 3-phosphoshikimate 1-carboxyvinyltransferase (427 aa).

3-phosphoshikimate-binding residues include Lys-22, Ser-23, and Arg-27. Lys-22 is a binding site for phosphoenolpyruvate. Residues Gly-96 and Arg-124 each coordinate phosphoenolpyruvate. Ser-169, Ser-170, Gln-171, Ser-197, Asp-313, Asn-336, and Lys-340 together coordinate 3-phosphoshikimate. Gln-171 lines the phosphoenolpyruvate pocket. Asp-313 acts as the Proton acceptor in catalysis. Arg-344, Arg-386, and Lys-411 together coordinate phosphoenolpyruvate.

This sequence belongs to the EPSP synthase family. As to quaternary structure, monomer.

It localises to the cytoplasm. The enzyme catalyses 3-phosphoshikimate + phosphoenolpyruvate = 5-O-(1-carboxyvinyl)-3-phosphoshikimate + phosphate. It functions in the pathway metabolic intermediate biosynthesis; chorismate biosynthesis; chorismate from D-erythrose 4-phosphate and phosphoenolpyruvate: step 6/7. Its function is as follows. Catalyzes the transfer of the enolpyruvyl moiety of phosphoenolpyruvate (PEP) to the 5-hydroxyl of shikimate-3-phosphate (S3P) to produce enolpyruvyl shikimate-3-phosphate and inorganic phosphate. In Salmonella agona (strain SL483), this protein is 3-phosphoshikimate 1-carboxyvinyltransferase.